The following is a 148-amino-acid chain: Large ribosomal subunit protein bL9 (148 aa).

The protein belongs to the bacterial ribosomal protein bL9 family.

Its function is as follows. Binds to the 23S rRNA. This Bifidobacterium longum (strain DJO10A) protein is Large ribosomal subunit protein bL9.